The primary structure comprises 520 residues: F-box/LRR-repeat protein At3g59200 (520 aa).

The region spanning 6–54 (RDRISSLPNPVVSHILSFLPTKEAASTSVLSKKWRYLFAYVTNLDFDDS) is the F-box domain. LRR repeat units lie at residues 170-197 (CVDV…VLMN), 219-244 (FCEE…EYSD), and 340-365 (NSEI…VLKR).

This chain is F-box/LRR-repeat protein At3g59200, found in Arabidopsis thaliana (Mouse-ear cress).